The following is a 473-amino-acid chain: MSIFSSRRQFLKSLGLAAGAAAAGNALPGKAVEIPAGDHLWKSASPAAPRPSGSTYMGGFKAPRLGRIRLAFIGVGGRGFSHLAQMCVMDGVEIVGICDLKEELTKRGVDRVLSRMGKSPLGYSGGDMEYLTMLKELKPDAVIISTDWSSHARIACDSMKHGAHAFVEVPLAVSLEELWSLVDTSEATRKHCMMMENVNYGRDELMFLNMVRQGVIGDLLHGEAAYIHCLVTQLGDTRGEGAWRPEYHTRINGNLYPTHGLGPVAQYMNLERGEDRFCRVAAFASPALGRNAYAKKHLPADHRWNNTPFICGDMNTAVVKTQLGRTILVQLDETSPRPYSRANLIQGTEGTLAGFPTRVAGEKLGNGNYHEWIEGREKLAAIYEKYDHPLWKRIGELATKMGGHGGMDFVMLSRIVECLRNGEPMDQNVYEGASWSSLLPLTARSIAQGGMPVEFPDFTRGDWKTTMPLAVVS.

The segment at residues 1–31 (MSIFSSRRQFLKSLGLAAGAAAAGNALPGKA) is a signal peptide (tat-type signal). NAD(+) contacts are provided by residues 77–78 (GR), Asp99, 148–151 (WSSH), 168–169 (EV), and Asn197. Residues Tyr226, Arg244, 256–259 (YPTH), and Tyr339 contribute to the substrate site. Tyr256 contacts NAD(+).

It belongs to the Gfo/Idh/MocA family. Glycosyl hydrolase 109 subfamily. It depends on NAD(+) as a cofactor. In terms of processing, predicted to be exported by the Tat system. The position of the signal peptide cleavage has not been experimentally proven.

Glycosidase. The protein is Glycosyl hydrolase family 109 protein 2 of Akkermansia muciniphila (strain ATCC BAA-835 / DSM 22959 / JCM 33894 / BCRC 81048 / CCUG 64013 / CIP 107961 / Muc).